The sequence spans 724 residues: Methionine--tRNA ligase (724 aa).

The short motif at 12–22 is the 'HIGH' region element; sequence PYVNNIPHLGN. Zn(2+) is bound by residues Cys-143, Cys-146, Cys-155, and Cys-158. A 'KMSKS' region motif is present at residues 330–334; the sequence is KFSKS. Lys-333 is a binding site for ATP. A tRNA-binding domain is found at 560-665; that stretch reads FREKVLLKVV…KNPIPGERII (106 aa).

Belongs to the class-I aminoacyl-tRNA synthetase family. MetG type 1 subfamily. As to quaternary structure, homodimer. Zn(2+) is required as a cofactor.

It is found in the cytoplasm. The catalysed reaction is tRNA(Met) + L-methionine + ATP = L-methionyl-tRNA(Met) + AMP + diphosphate. In terms of biological role, is required not only for elongation of protein synthesis but also for the initiation of all mRNA translation through initiator tRNA(fMet) aminoacylation. This Borrelia garinii subsp. bavariensis (strain ATCC BAA-2496 / DSM 23469 / PBi) (Borreliella bavariensis) protein is Methionine--tRNA ligase.